The following is a 148-amino-acid chain: Transthyretin-like protein 2 (148 aa).

The first 17 residues, 1–17 (MSKYAILGLVLVGTVAS), serve as a signal peptide directing secretion. A glycan (N-linked (GlcNAc...) asparagine) is linked at N77.

The protein belongs to the nematode transthyretin-like family.

The protein resides in the secreted. The protein is Transthyretin-like protein 2 (ttr-2) of Caenorhabditis elegans.